The sequence spans 301 residues: Probable 5-dehydro-4-deoxyglucarate dehydratase (301 aa).

The protein belongs to the DapA family.

It catalyses the reaction 5-dehydro-4-deoxy-D-glucarate + H(+) = 2,5-dioxopentanoate + CO2 + H2O. It participates in carbohydrate acid metabolism; D-glucarate degradation; 2,5-dioxopentanoate from D-glucarate: step 2/2. The chain is Probable 5-dehydro-4-deoxyglucarate dehydratase from Cereibacter sphaeroides (strain ATCC 17029 / ATH 2.4.9) (Rhodobacter sphaeroides).